The sequence spans 1367 residues: Flocculation protein FLO11 (1367 aa).

The N-terminal stretch at 1–21 is a signal peptide; the sequence is MQRPFLLAYLVLSLLFNSALG. In terms of domain architecture, Flo11 spans 31 to 207; the sequence is SSEGTSCNSI…NIDCDNNCGG (177 aa). 3 disulfides stabilise this stretch: C37-C201, C44-C179, and C141-C205. Low complexity predominate over residues 209–267; it reads KSSTTTSSTSESSTTTSSTSESSTTTSSTSESSTTTSSTSESSTSSSTTAPATPTTTSC. 2 disordered regions span residues 209–975 and 1008–1032; these read KSST…TTSV and TTTV…PTTP. Repeat copies occupy residues 210 to 219, 220 to 229, 230 to 239, 240 to 249, 262 to 274, 275 to 287, 313 to 327, 328 to 342, 343 to 354, 355 to 369, 370 to 381, 382 to 393, 394 to 408, 409 to 420, 421 to 432, 433 to 444, 445 to 456, 457 to 471, 472 to 483, 484 to 498, 499 to 510, 511 to 525, 526 to 540, 541 to 552, 568 to 579, 580 to 594, 595 to 609, 610 to 624, 625 to 636, 637 to 651, 652 to 666, 667 to 681, 682 to 693, 694 to 705, 706 to 720, 721 to 735, 736 to 750, 751 to 762, 763 to 777, 778 to 792, 808 to 822, 838 to 852, 865 to 879, 937 to 968, and 981 to 1012. The tract at residues 210 to 249 is 4 X 10 AA repeats, Ser/Thr-rich; that stretch reads SSTTTSSTSESSTTTSSTSESSTTTSSTSESSTTTSSTSE. Positions 262-287 are 2 X 13 AA repeats, Thr-rich; sequence PTTTSCTKEKPTPPTTTSCTKEKPTP. Over residues 281 to 292 the composition is skewed to basic and acidic residues; it reads TKEKPTPPHHDT. 2 stretches are compositionally biased toward low complexity: residues 302–900 and 910–948; these read TSKT…TVTP and TETS…STGT. Residues 313-852 form a 22 X 15 AA approximate repeats, Ser-rich region; that stretch reads PVPTPSSSTT…SSSTTESSSA (540 aa). The segment at 343 to 762 is 15 X 12 AA repeats, Ser/Thr-rich; the sequence is PVTSSTTESS…TSSTTESSSA (420 aa). Residue N817 is glycosylated (N-linked (GlcNAc...) asparagine). The N-linked (GlcNAc...) asparagine glycan is linked to N874. The segment at 937 to 1119 is 3 X 32 AA tandem repeats, Thr-rich; sequence TTITTTVCST…SPKTVTTTVP (183 aa). A compositionally biased stretch (polar residues) spans 949 to 961; that stretch reads NSAGETTSGCSPK. Residues 962-975 show a composition bias toward low complexity; it reads TVTTTVPTTTTTSV. Residues 1014-1032 are compositionally biased toward low complexity; the sequence is STSPSETASESTTTSPTTP. A 5-3 repeat occupies 1088-1119; sequence TTITTTVCSTGTNSAGETTSGCSPKTVTTTVP. The GPI-anchor amidated glycine moiety is linked to residue G1346. Positions 1347–1367 are cleaved as a propeptide — removed in mature form; it reads AANIKVLGNFMWLLLALPVVF.

The protein belongs to the flocculin family. Highly divergent. In terms of processing, extensively O-mannosylated. Post-translationally, the GPI-anchor is attached to the protein in the endoplasmic reticulum and serves to target the protein to the cell surface. There, the glucosamine-inositol phospholipid moiety is cleaved off and the GPI-modified mannoprotein is covalently attached via its lipidless GPI glycan remnant to the 1,6-beta-glucan of the outer cell wall layer. A soluble form is probably produced by proteolytic cleavage at the cell surface (shedding).

It is found in the secreted. The protein localises to the cell wall. The protein resides in the membrane. In terms of biological role, homophilic binding protein that enables kin discrimination in heterogeneous yeast populations by mediating homotypic cell-cell interactions during flocculation, a reversible and asexual process in which cells adhere to form aggregates (flocs). Plays a role in cell-substrate adhesion, haploid invasive growth, diploid pseudohyphae formation and biofilm (flor) development. Adhesive activity is inhibited by mannose, but not by glucose, maltose, sucrose or galactose. The polypeptide is Flocculation protein FLO11 (Saccharomyces cerevisiae (strain ATCC 204508 / S288c) (Baker's yeast)).